The following is a 1040-amino-acid chain: Multidrug resistance protein MdtB (1040 aa).

12 helical membrane-spanning segments follow: residues 16-36, 347-367, 369-389, 396-416, 440-460, 472-492, 537-557, 863-883, 888-908, 911-931, 968-988, and 998-1018; these read FIMR…AGII, LMMA…NIPA, IIPG…MVFL, LTLM…IVVI, IGFT…PLLF, FAIT…TLTP, WLTL…WVFI, LGST…VLGI, FIHP…ALLA, IAGS…IGIV, ILMT…STGV, and IGMV…TPVI.

The protein belongs to the resistance-nodulation-cell division (RND) (TC 2.A.6) family. MdtB subfamily. In terms of assembly, part of a tripartite efflux system composed of MdtA, MdtB and MdtC. MdtB forms a heteromultimer with MdtC.

Its subcellular location is the cell inner membrane. In terms of biological role, the MdtABC tripartite complex confers resistance against novobiocin and deoxycholate. The sequence is that of Multidrug resistance protein MdtB from Escherichia coli O9:H4 (strain HS).